The primary structure comprises 442 residues: DNA topoisomerase medium subunit (442 aa).

The region spanning 29–438 is the Topo IIA-type catalytic domain; it reads IPNMIDGFKP…DVVTEYTKDL (410 aa). Residue Tyr-117 is the O-(5'-phospho-DNA)-tyrosine intermediate of the active site.

Belongs to the type II topoisomerase family. Part of the DNA topoisomerase complex made of gp39, gp52 and gp60. Requires Mg(2+) as cofactor.

The enzyme catalyses ATP-dependent breakage, passage and rejoining of double-stranded DNA.. In terms of biological role, medium subunit of the DNA topoisomerase that untwists superhelical DNA. Controls topological states of double-stranded DNA by transient breakage and subsequent rejoining of DNA strands. This is DNA topoisomerase medium subunit (52) from Enterobacteria phage T4 (Bacteriophage T4).